Reading from the N-terminus, the 643-residue chain is Transmembrane protein 62 (643 aa).

The helical transmembrane segment at Val9–Ala29 threads the bilayer. The N-linked (GlcNAc...) asparagine glycan is linked to Asn180. 4 consecutive transmembrane segments (helical) span residues Ile431–Phe451, Tyr484–Ile504, Gly532–Leu552, and Ile572–Phe592.

It is found in the membrane. This Mus musculus (Mouse) protein is Transmembrane protein 62 (Tmem62).